We begin with the raw amino-acid sequence, 168 residues long: MENLVGLLRIHVKRGVNLAIRDISSSDPYIVVHCGKQKLKTRVVKHSVNPEWNDDLTLSVTDPNLPIKLTVYDYDLLSADDKMGEAEFHIGPFIEAIKFAHQLGPGLPNGTIIKKIEPSRKNCLSESSHIVLNQGKIVQNMFLRLQHVECGEVELQLEWIDVPGSRGI.

M1 bears the N-acetylmethionine mark. One can recognise a C2 domain in the interval 1–104 (MENLVGLLRI…EAIKFAHQLG (104 aa)). Ca(2+) is bound by residues R21, D22, D27, D73, Y74, D75, and D81.

The protein belongs to the plant CAR protein family. As to quaternary structure, dimers and oligomers. Binds to PYR/PYL/RCAR abscisic acid intracellular receptors in an ABA-independent manner, both at the plasma membrane and in the nucleus. Interacts directly with PYR1, PYL1, PYL4, PYL6 and PYL8. Binds phospholipids in a Ca(2+)-dependent manner. Ca(2+) is required as a cofactor. In terms of tissue distribution, expressed in roots.

The protein localises to the cell membrane. It is found in the nucleus. Its function is as follows. Stimulates the GTPase/ATPase activities of Obg-like ATPases. Mediates the transient calcium-dependent interaction of PYR/PYL/RCAR abscisic acid (ABA) receptors with the plasma membrane and thus regulates ABA sensitivity. Binds liposomes in the absence of exogenous Ca(2+), but this activity is enhanced in the presence of Ca(2+) and generates membrane curvature. In Arabidopsis thaliana (Mouse-ear cress), this protein is Protein C2-DOMAIN ABA-RELATED 1.